We begin with the raw amino-acid sequence, 898 residues long: Putative disease resistance protein At1g63350 (898 aa).

Residues 24-88 (VSYTHNLEKN…IESRVNDLLN (65 aa)) adopt a coiled-coil conformation. One can recognise an NB-ARC domain in the interval 137 to 440 (DQASTSEVEE…CEEIIDGSEG (304 aa)). 179-186 (GMGGVGKT) lines the ATP pocket. LRR repeat units follow at residues 516-537 (VVRR…LDCM), 538-559 (ELTT…FFNS), 562-584 (KLAV…ISEL), 586-608 (SLQY…QELK), 609-631 (KLIH…SCLH), and 632-654 (NLKV…KELE).

The protein belongs to the disease resistance NB-LRR family.

Functionally, potential disease resistance protein. In Arabidopsis thaliana (Mouse-ear cress), this protein is Putative disease resistance protein At1g63350.